Reading from the N-terminus, the 756-residue chain is 1,4-alpha-glucan branching enzyme GlgB (756 aa).

Aspartate 431 (nucleophile) is an active-site residue. Glutamate 484 acts as the Proton donor in catalysis.

It belongs to the glycosyl hydrolase 13 family. GlgB subfamily. In terms of assembly, monomer.

The enzyme catalyses Transfers a segment of a (1-&gt;4)-alpha-D-glucan chain to a primary hydroxy group in a similar glucan chain.. It functions in the pathway glycan biosynthesis; glycogen biosynthesis. Functionally, catalyzes the formation of the alpha-1,6-glucosidic linkages in glycogen by scission of a 1,4-alpha-linked oligosaccharide from growing alpha-1,4-glucan chains and the subsequent attachment of the oligosaccharide to the alpha-1,6 position. This is 1,4-alpha-glucan branching enzyme GlgB from Prochlorococcus marinus (strain MIT 9303).